Here is a 492-residue protein sequence, read N- to C-terminus: KRAB-A domain-containing protein 2 (492 aa).

The KRAB domain occupies 36 to 117; sequence LFQEATAFEN…MREKFLMSVT (82 aa). Ser-115 is modified (phosphoserine). Thr-117 is subject to Phosphothreonine. The 169-residue stretch at 247–415 folds into the Integrase catalytic domain; sequence RGLAPKPMTF…SPFEAMFGYK (169 aa). The stretch at 427 to 457 forms a coiled coil; it reads RETVATLQTEEELEIAEEQLENSLWIRQEER. The span at 455 to 465 shows a compositional bias: basic and acidic residues; that stretch reads EERAEIGADRS. A disordered region spans residues 455 to 492; that stretch reads EERAEIGADRSDMDDDMDPTPEASEPSTSQGTSGLLCW. Polar residues predominate over residues 479-492; the sequence is EPSTSQGTSGLLCW.

The polypeptide is KRAB-A domain-containing protein 2 (KRBA2) (Homo sapiens (Human)).